Here is a 141-residue protein sequence, read N- to C-terminus: uncharacterized protein (141 aa).

Transmembrane regions (helical) follow at residues Leu32–Ile52, Ile69–Phe89, and Phe109–Tyr129.

It localises to the cell membrane. This is an uncharacterized protein from Methanocaldococcus jannaschii (strain ATCC 43067 / DSM 2661 / JAL-1 / JCM 10045 / NBRC 100440) (Methanococcus jannaschii).